The chain runs to 273 residues: Ribosomal RNA small subunit methyltransferase A (273 aa).

S-adenosyl-L-methionine contacts are provided by N20, L22, G47, E68, D90, and N110.

Belongs to the class I-like SAM-binding methyltransferase superfamily. rRNA adenine N(6)-methyltransferase family. RsmA subfamily.

The protein resides in the cytoplasm. The catalysed reaction is adenosine(1518)/adenosine(1519) in 16S rRNA + 4 S-adenosyl-L-methionine = N(6)-dimethyladenosine(1518)/N(6)-dimethyladenosine(1519) in 16S rRNA + 4 S-adenosyl-L-homocysteine + 4 H(+). Functionally, specifically dimethylates two adjacent adenosines (A1518 and A1519) in the loop of a conserved hairpin near the 3'-end of 16S rRNA in the 30S particle. May play a critical role in biogenesis of 30S subunits. This chain is Ribosomal RNA small subunit methyltransferase A, found in Chlorobium luteolum (strain DSM 273 / BCRC 81028 / 2530) (Pelodictyon luteolum).